The chain runs to 405 residues: Phosphoglycerate kinase (405 aa).

Substrate contacts are provided by residues 21–23 (DFN), Arg-36, 59–62 (HLGR), Arg-119, and Arg-161. ATP is bound by residues Lys-212, Gly-301, Glu-332, and 361–364 (GGDS).

It belongs to the phosphoglycerate kinase family. In terms of assembly, monomer.

It localises to the cytoplasm. It catalyses the reaction (2R)-3-phosphoglycerate + ATP = (2R)-3-phospho-glyceroyl phosphate + ADP. The protein operates within carbohydrate degradation; glycolysis; pyruvate from D-glyceraldehyde 3-phosphate: step 2/5. This is Phosphoglycerate kinase from Leuconostoc citreum (strain KM20).